The following is a 170-amino-acid chain: Large ribosomal subunit protein uL10 (170 aa).

It belongs to the universal ribosomal protein uL10 family. In terms of assembly, part of the ribosomal stalk of the 50S ribosomal subunit. The N-terminus interacts with L11 and the large rRNA to form the base of the stalk. The C-terminus forms an elongated spine to which L12 dimers bind in a sequential fashion forming a multimeric L10(L12)X complex.

Forms part of the ribosomal stalk, playing a central role in the interaction of the ribosome with GTP-bound translation factors. This Nitratiruptor sp. (strain SB155-2) protein is Large ribosomal subunit protein uL10.